Consider the following 130-residue polypeptide: Modulator protein MzrA (130 aa).

The Cytoplasmic portion of the chain corresponds to 1–15 (MIAAFIKRHAPQRRL). The chain crosses the membrane as a helical span at residues 16-36 (SLWLALPVVALLALVMMPALF). Topologically, residues 37 to 130 (RHDSALQIRA…RISFKPQSIG (94 aa)) are periplasmic.

Belongs to the MzrA family. Interacts with EnvZ.

The protein resides in the cell inner membrane. Functionally, modulates the activity of the EnvZ/OmpR two-component regulatory system, probably by directly modulating EnvZ enzymatic activity and increasing stability of phosphorylated OmpR. This Erwinia tasmaniensis (strain DSM 17950 / CFBP 7177 / CIP 109463 / NCPPB 4357 / Et1/99) protein is Modulator protein MzrA.